Consider the following 294-residue polypeptide: UDP-3-O-acyl-N-acetylglucosamine deacetylase (294 aa).

Positions 75, 232, and 236 each coordinate Zn(2+). The active-site Proton donor is His259.

It belongs to the LpxC family. Requires Zn(2+) as cofactor.

The enzyme catalyses a UDP-3-O-[(3R)-3-hydroxyacyl]-N-acetyl-alpha-D-glucosamine + H2O = a UDP-3-O-[(3R)-3-hydroxyacyl]-alpha-D-glucosamine + acetate. Its pathway is glycolipid biosynthesis; lipid IV(A) biosynthesis; lipid IV(A) from (3R)-3-hydroxytetradecanoyl-[acyl-carrier-protein] and UDP-N-acetyl-alpha-D-glucosamine: step 2/6. Catalyzes the hydrolysis of UDP-3-O-myristoyl-N-acetylglucosamine to form UDP-3-O-myristoylglucosamine and acetate, the committed step in lipid A biosynthesis. This is UDP-3-O-acyl-N-acetylglucosamine deacetylase from Sulfurimonas denitrificans (strain ATCC 33889 / DSM 1251) (Thiomicrospira denitrificans (strain ATCC 33889 / DSM 1251)).